A 219-amino-acid chain; its full sequence is 7-cyano-7-deazaguanine synthase (219 aa).

10-20 lines the ATP pocket; that stretch reads FSGGQDSTTCL. Zn(2+) is bound by residues Cys188, Cys197, Cys200, and Cys203.

The protein belongs to the QueC family. In terms of assembly, homodimer. It depends on Zn(2+) as a cofactor.

It carries out the reaction 7-carboxy-7-deazaguanine + NH4(+) + ATP = 7-cyano-7-deazaguanine + ADP + phosphate + H2O + H(+). It functions in the pathway purine metabolism; 7-cyano-7-deazaguanine biosynthesis. Catalyzes the ATP-dependent conversion of 7-carboxy-7-deazaguanine (CDG) to 7-cyano-7-deazaguanine (preQ(0)). The protein is 7-cyano-7-deazaguanine synthase of Clostridium botulinum (strain 657 / Type Ba4).